The following is a 377-amino-acid chain: Succinyl-diaminopimelate desuccinylase (377 aa).

His66 provides a ligand contact to Zn(2+). The active site involves Asp68. Asp99 contacts Zn(2+). The active-site Proton acceptor is Glu133. Zn(2+)-binding residues include Glu134, Glu162, and His348.

The protein belongs to the peptidase M20A family. DapE subfamily. As to quaternary structure, homodimer. The cofactor is Zn(2+). Co(2+) serves as cofactor.

It catalyses the reaction N-succinyl-(2S,6S)-2,6-diaminopimelate + H2O = (2S,6S)-2,6-diaminopimelate + succinate. Its pathway is amino-acid biosynthesis; L-lysine biosynthesis via DAP pathway; LL-2,6-diaminopimelate from (S)-tetrahydrodipicolinate (succinylase route): step 3/3. Its function is as follows. Catalyzes the hydrolysis of N-succinyl-L,L-diaminopimelic acid (SDAP), forming succinate and LL-2,6-diaminopimelate (DAP), an intermediate involved in the bacterial biosynthesis of lysine and meso-diaminopimelic acid, an essential component of bacterial cell walls. This is Succinyl-diaminopimelate desuccinylase from Methylococcus capsulatus (strain ATCC 33009 / NCIMB 11132 / Bath).